The primary structure comprises 253 residues: Blue-light photoreceptor (253 aa).

The PAS domain occupies 6 to 79; that stretch reads KFDVILKALN…AKIRHAINEK (74 aa). Cysteine 56 is subject to S-4a-FMN cysteine. The PAC domain maps to 80 to 133; sequence STANVLLKNYRKNGTSFMNELTIEPIYDDNDHLYFVGIQKDVTTEHNYQLELEK. In terms of domain architecture, STAS spans 142 to 253; sequence STPIVPIKEN…STIKEALQFY (112 aa).

Post-translationally, FMN binds covalently to cysteine after exposure to blue light and this bond is spontaneously broken in the dark.

Functionally, exhibits the same spectroscopical features and blue-light induced photochemistry as plants phototropins, with the reversible formation of a blue-shifted photoproduct, assigned to an FMN-cysteine thiol adduct. Positive regulator in the activation of the general stress transcription factor sigma-B. In Listeria innocua serovar 6a (strain ATCC BAA-680 / CLIP 11262), this protein is Blue-light photoreceptor.